A 173-amino-acid chain; its full sequence is NADH-ubiquinone oxidoreductase chain 6 (173 aa).

The next 5 membrane-spanning stretches (helical) occupy residues 1–21 (MTYF…AVAS), 27–47 (YGVV…LSLG), 48–68 (VSFV…VVFV), 87–107 (VVGY…VGGL), and 139–159 (CGVG…FVVL).

The protein belongs to the complex I subunit 6 family.

Its subcellular location is the mitochondrion membrane. The enzyme catalyses a ubiquinone + NADH + 5 H(+)(in) = a ubiquinol + NAD(+) + 4 H(+)(out). Its function is as follows. Core subunit of the mitochondrial membrane respiratory chain NADH dehydrogenase (Complex I) that is believed to belong to the minimal assembly required for catalysis. Complex I functions in the transfer of electrons from NADH to the respiratory chain. The immediate electron acceptor for the enzyme is believed to be ubiquinone. The protein is NADH-ubiquinone oxidoreductase chain 6 (MT-ND6) of Larus canus (Common gull).